Reading from the N-terminus, the 137-residue chain is Small ribosomal subunit protein bS18c (137 aa).

It belongs to the bacterial ribosomal protein bS18 family. Part of the 30S ribosomal subunit.

The protein resides in the plastid. The protein localises to the chloroplast. The protein is Small ribosomal subunit protein bS18c (rps18) of Chlamydomonas reinhardtii (Chlamydomonas smithii).